We begin with the raw amino-acid sequence, 354 residues long: Sulfate/thiosulfate import ATP-binding protein CysA (354 aa).

In terms of domain architecture, ABC transporter spans 3-237 (IEVRGLSKRF…PATPFVYGFL (235 aa)). 35 to 42 (GPSGCGKT) contacts ATP.

It belongs to the ABC transporter superfamily. Sulfate/tungstate importer (TC 3.A.1.6) family. In terms of assembly, the complex is composed of two ATP-binding proteins (CysA), two transmembrane proteins (CysT and CysW) and a solute-binding protein (CysP).

The protein localises to the cell inner membrane. The catalysed reaction is sulfate(out) + ATP + H2O = sulfate(in) + ADP + phosphate + H(+). It catalyses the reaction thiosulfate(out) + ATP + H2O = thiosulfate(in) + ADP + phosphate + H(+). Part of the ABC transporter complex CysAWTP involved in sulfate/thiosulfate import. Responsible for energy coupling to the transport system. The chain is Sulfate/thiosulfate import ATP-binding protein CysA from Bordetella bronchiseptica (strain ATCC BAA-588 / NCTC 13252 / RB50) (Alcaligenes bronchisepticus).